Here is a 722-residue protein sequence, read N- to C-terminus: Putative tyrosine-protein kinase in cps region (722 aa).

2 consecutive transmembrane segments (helical) span residues 31 to 53 and 427 to 449; these read IIIA…ATPI and IVVL…VRIL.

It belongs to the etk/wzc family. Autophosphorylated on tyrosine residue(s).

The protein resides in the cell inner membrane. It catalyses the reaction L-tyrosyl-[protein] + ATP = O-phospho-L-tyrosyl-[protein] + ADP + H(+). It participates in glycan metabolism; exopolysaccharide biosynthesis. The sequence is that of Putative tyrosine-protein kinase in cps region from Klebsiella pneumoniae.